Here is a 132-residue protein sequence, read N- to C-terminus: Myelin P2 protein (132 aa).

Ser-2 carries the N-acetylserine modification. Arg-107 contributes to the (9Z)-octadecenoate binding site. Arg-107 provides a ligand contact to hexadecanoate. A disulfide bridge connects residues Cys-118 and Cys-125. Residue 127 to 129 participates in (9Z)-octadecenoate binding; that stretch reads RIY. 127-129 contacts hexadecanoate; that stretch reads RIY.

This sequence belongs to the calycin superfamily. Fatty-acid binding protein (FABP) family. As to quaternary structure, monomer. As to expression, detected in spinal cord (at protein level).

The protein resides in the cytoplasm. In terms of biological role, may play a role in lipid transport protein in Schwann cells. May bind cholesterol. In Equus caballus (Horse), this protein is Myelin P2 protein (PMP2).